A 293-amino-acid polypeptide reads, in one-letter code: 4-hydroxy-tetrahydrodipicolinate synthase (293 aa).

Thr45 is a binding site for pyruvate. Tyr133 acts as the Proton donor/acceptor in catalysis. The Schiff-base intermediate with substrate role is filled by Lys161. Residue Ile203 coordinates pyruvate.

It belongs to the DapA family. Homotetramer; dimer of dimers.

It localises to the cytoplasm. The catalysed reaction is L-aspartate 4-semialdehyde + pyruvate = (2S,4S)-4-hydroxy-2,3,4,5-tetrahydrodipicolinate + H2O + H(+). It functions in the pathway amino-acid biosynthesis; L-lysine biosynthesis via DAP pathway; (S)-tetrahydrodipicolinate from L-aspartate: step 3/4. Its function is as follows. Catalyzes the condensation of (S)-aspartate-beta-semialdehyde [(S)-ASA] and pyruvate to 4-hydroxy-tetrahydrodipicolinate (HTPA). This chain is 4-hydroxy-tetrahydrodipicolinate synthase, found in Aliivibrio salmonicida (strain LFI1238) (Vibrio salmonicida (strain LFI1238)).